We begin with the raw amino-acid sequence, 507 residues long: ATP synthase subunit alpha (507 aa).

170 to 177 (GDRKTGKT) serves as a coordination point for ATP.

It belongs to the ATPase alpha/beta chains family. F-type ATPases have 2 components, CF(1) - the catalytic core - and CF(0) - the membrane proton channel. CF(1) has five subunits: alpha(3), beta(3), gamma(1), delta(1), epsilon(1). CF(0) has three main subunits: a(1), b(2) and c(9-12). The alpha and beta chains form an alternating ring which encloses part of the gamma chain. CF(1) is attached to CF(0) by a central stalk formed by the gamma and epsilon chains, while a peripheral stalk is formed by the delta and b chains.

The protein localises to the cell inner membrane. The catalysed reaction is ATP + H2O + 4 H(+)(in) = ADP + phosphate + 5 H(+)(out). Functionally, produces ATP from ADP in the presence of a proton gradient across the membrane. The alpha chain is a regulatory subunit. This chain is ATP synthase subunit alpha, found in Anaplasma marginale (strain Florida).